Here is a 448-residue protein sequence, read N- to C-terminus: Probable glycine dehydrogenase (decarboxylating) subunit 1 (448 aa).

This sequence belongs to the GcvP family. N-terminal subunit subfamily. The glycine cleavage system is composed of four proteins: P, T, L and H. In this organism, the P 'protein' is a heterodimer of two subunits.

It carries out the reaction N(6)-[(R)-lipoyl]-L-lysyl-[glycine-cleavage complex H protein] + glycine + H(+) = N(6)-[(R)-S(8)-aminomethyldihydrolipoyl]-L-lysyl-[glycine-cleavage complex H protein] + CO2. The glycine cleavage system catalyzes the degradation of glycine. The P protein binds the alpha-amino group of glycine through its pyridoxal phosphate cofactor; CO(2) is released and the remaining methylamine moiety is then transferred to the lipoamide cofactor of the H protein. In Listeria monocytogenes serotype 4b (strain F2365), this protein is Probable glycine dehydrogenase (decarboxylating) subunit 1.